Reading from the N-terminus, the 139-residue chain is Large-conductance mechanosensitive channel (139 aa).

3 helical membrane passes run 19–39 (VGVI…ADII), 40–60 (MPIV…LPLS), and 81–101 (GNFL…FMVI).

This sequence belongs to the MscL family. As to quaternary structure, homopentamer.

The protein localises to the cell inner membrane. Channel that opens in response to stretch forces in the membrane lipid bilayer. May participate in the regulation of osmotic pressure changes within the cell. In Nitrobacter winogradskyi (strain ATCC 25391 / DSM 10237 / CIP 104748 / NCIMB 11846 / Nb-255), this protein is Large-conductance mechanosensitive channel.